Consider the following 375-residue polypeptide: 23S rRNA (uracil(747)-C(5))-methyltransferase RlmC (375 aa).

Residues Cys3, Cys11, Cys14, and Cys87 each coordinate [4Fe-4S] cluster. S-adenosyl-L-methionine is bound by residues Gln212, Phe241, Glu262, and Asn307. Cys334 functions as the Nucleophile in the catalytic mechanism.

The protein belongs to the class I-like SAM-binding methyltransferase superfamily. RNA M5U methyltransferase family. RlmC subfamily.

It catalyses the reaction uridine(747) in 23S rRNA + S-adenosyl-L-methionine = 5-methyluridine(747) in 23S rRNA + S-adenosyl-L-homocysteine + H(+). Its function is as follows. Catalyzes the formation of 5-methyl-uridine at position 747 (m5U747) in 23S rRNA. The chain is 23S rRNA (uracil(747)-C(5))-methyltransferase RlmC from Salmonella enteritidis PT4 (strain P125109).